A 207-amino-acid chain; its full sequence is rRNA N(6)-adenosine-methyltransferase METTL5 (207 aa).

S-adenosyl-L-methionine contacts are provided by residues Gln25, Thr28, Gly56, Cys59, Val61, Asp78, and 105 to 106; that span reads DV.

The protein belongs to the methyltransferase superfamily. PrmA family.

The protein localises to the nucleus. It is found in the presynapse. Its subcellular location is the postsynapse. The enzyme catalyses adenosine(1832) in 18S rRNA + S-adenosyl-L-methionine = N(6)-methyladenosine(1832) in 18S rRNA + S-adenosyl-L-homocysteine + H(+). RRNA N6-adenosine-methyltransferase activity is inhibited by zinc. Its function is as follows. Catalytic subunit of a heterodimer with TRMT112, which specifically methylates the 6th position of adenine in position 1832 of 18S rRNA. N6-methylation of adenine(1832) in 18S rRNA resides in the decoding center of 18S rRNA and is required for translation and embryonic stem cells (ESCs) pluripotency and differentiation. The sequence is that of rRNA N(6)-adenosine-methyltransferase METTL5 from Danio rerio (Zebrafish).